We begin with the raw amino-acid sequence, 192 residues long: UPF0301 protein Bamb_0737 (192 aa).

This sequence belongs to the UPF0301 (AlgH) family.

The chain is UPF0301 protein Bamb_0737 from Burkholderia ambifaria (strain ATCC BAA-244 / DSM 16087 / CCUG 44356 / LMG 19182 / AMMD) (Burkholderia cepacia (strain AMMD)).